Reading from the N-terminus, the 513-residue chain is Bifunctional purine biosynthesis protein PurH (513 aa).

The region spanning 1–145 (MTKRALISVS…KNYQDVTAVV (145 aa)) is the MGS-like domain.

This sequence belongs to the PurH family.

The enzyme catalyses (6R)-10-formyltetrahydrofolate + 5-amino-1-(5-phospho-beta-D-ribosyl)imidazole-4-carboxamide = 5-formamido-1-(5-phospho-D-ribosyl)imidazole-4-carboxamide + (6S)-5,6,7,8-tetrahydrofolate. It catalyses the reaction IMP + H2O = 5-formamido-1-(5-phospho-D-ribosyl)imidazole-4-carboxamide. It functions in the pathway purine metabolism; IMP biosynthesis via de novo pathway; 5-formamido-1-(5-phospho-D-ribosyl)imidazole-4-carboxamide from 5-amino-1-(5-phospho-D-ribosyl)imidazole-4-carboxamide (10-formyl THF route): step 1/1. It participates in purine metabolism; IMP biosynthesis via de novo pathway; IMP from 5-formamido-1-(5-phospho-D-ribosyl)imidazole-4-carboxamide: step 1/1. The chain is Bifunctional purine biosynthesis protein PurH from Enterococcus faecalis (strain ATCC 700802 / V583).